Consider the following 152-residue polypeptide: Xanthine-guanine phosphoribosyltransferase (152 aa).

5-phospho-alpha-D-ribose 1-diphosphate-binding positions include 37 to 38 (RG), R69, and 88 to 96 (DDLVDTGGT). R69 serves as a coordination point for GMP. D89 is a Mg(2+) binding site. 2 residues coordinate guanine: D92 and I135. Positions 92 and 135 each coordinate xanthine. GMP is bound by residues 92 to 96 (DTGGT) and 134 to 135 (WI).

Belongs to the purine/pyrimidine phosphoribosyltransferase family. XGPT subfamily. As to quaternary structure, homotetramer. The cofactor is Mg(2+).

It is found in the cell inner membrane. The enzyme catalyses GMP + diphosphate = guanine + 5-phospho-alpha-D-ribose 1-diphosphate. It carries out the reaction XMP + diphosphate = xanthine + 5-phospho-alpha-D-ribose 1-diphosphate. The catalysed reaction is IMP + diphosphate = hypoxanthine + 5-phospho-alpha-D-ribose 1-diphosphate. It functions in the pathway purine metabolism; GMP biosynthesis via salvage pathway; GMP from guanine: step 1/1. Its pathway is purine metabolism; XMP biosynthesis via salvage pathway; XMP from xanthine: step 1/1. Functionally, purine salvage pathway enzyme that catalyzes the transfer of the ribosyl-5-phosphate group from 5-phospho-alpha-D-ribose 1-diphosphate (PRPP) to the N9 position of the 6-oxopurines guanine and xanthine to form the corresponding ribonucleotides GMP (guanosine 5'-monophosphate) and XMP (xanthosine 5'-monophosphate), with the release of PPi. To a lesser extent, also acts on hypoxanthine. This Citrobacter koseri (strain ATCC BAA-895 / CDC 4225-83 / SGSC4696) protein is Xanthine-guanine phosphoribosyltransferase.